Here is a 206-residue protein sequence, read N- to C-terminus: Small ribosomal subunit protein uS4 (206 aa).

Residues 18–46 (NIWGRPKSPVNRREYGPGQHGQRRKGKIS) are disordered. The S4 RNA-binding domain maps to 94 to 154 (RRLDAVVYRA…DRSKQMVALI (61 aa)).

Belongs to the universal ribosomal protein uS4 family. In terms of assembly, part of the 30S ribosomal subunit. Contacts protein S5. The interaction surface between S4 and S5 is involved in control of translational fidelity.

Its function is as follows. One of the primary rRNA binding proteins, it binds directly to 16S rRNA where it nucleates assembly of the body of the 30S subunit. With S5 and S12 plays an important role in translational accuracy. The protein is Small ribosomal subunit protein uS4 of Roseobacter denitrificans (strain ATCC 33942 / OCh 114) (Erythrobacter sp. (strain OCh 114)).